A 1076-amino-acid polypeptide reads, in one-letter code: Bifunctional glutamine synthetase adenylyltransferase/adenylyl-removing enzyme (1076 aa).

The tract at residues 1–521 (MESSIFKPSS…LHLDIYYRPM (521 aa)) is adenylyl removase. The tract at residues 524–1076 (VNAQMENDQI…LERNRRRAQR (553 aa)) is adenylyl transferase. Residues 1042-1056 (TATASAATQQPQTAP) are compositionally biased toward low complexity. The interval 1042–1076 (TATASAATQQPQTAPRPRMHVIAPRLERNRRRAQR) is disordered.

It belongs to the GlnE family. Mg(2+) is required as a cofactor.

The enzyme catalyses [glutamine synthetase]-O(4)-(5'-adenylyl)-L-tyrosine + phosphate = [glutamine synthetase]-L-tyrosine + ADP. The catalysed reaction is [glutamine synthetase]-L-tyrosine + ATP = [glutamine synthetase]-O(4)-(5'-adenylyl)-L-tyrosine + diphosphate. Functionally, involved in the regulation of glutamine synthetase GlnA, a key enzyme in the process to assimilate ammonia. When cellular nitrogen levels are high, the C-terminal adenylyl transferase (AT) inactivates GlnA by covalent transfer of an adenylyl group from ATP to specific tyrosine residue of GlnA, thus reducing its activity. Conversely, when nitrogen levels are low, the N-terminal adenylyl removase (AR) activates GlnA by removing the adenylyl group by phosphorolysis, increasing its activity. The regulatory region of GlnE binds the signal transduction protein PII (GlnB) which indicates the nitrogen status of the cell. The sequence is that of Bifunctional glutamine synthetase adenylyltransferase/adenylyl-removing enzyme from Bifidobacterium longum (strain DJO10A).